The sequence spans 216 residues: Co-chaperone protein SBA1 (216 aa).

Serine 2 is modified (N-acetylserine). The CS domain occupies 5-108 (VINPQVAWAQ…LESEYWPRLT (104 aa)). 2 repeats span residues 141–156 (AQGMDFSQMMGGAGGA) and 160–174 (GGMDFSQMMGGAGGA). The segment at 169–216 (GGAGGAGSPDMAQLQQLLAQSGGNLDMGDFKENDEEDEEEEIEPEVKA) is disordered. Residues 200–216 (ENDEEDEEEEIEPEVKA) are compositionally biased toward acidic residues.

This sequence belongs to the p23/wos2 family. In terms of assembly, interacts with HSP82.

In terms of biological role, acts as a co-chaperone. This Saccharomyces cerevisiae (strain ATCC 204508 / S288c) (Baker's yeast) protein is Co-chaperone protein SBA1 (SBA1).